Reading from the N-terminus, the 295-residue chain is uncharacterized protein (295 aa).

This is an uncharacterized protein from Xanthobacter autotrophicus.